A 2427-amino-acid chain; its full sequence is Interferon-induced very large GTPase 1 (2427 aa).

Positions 1485 to 1726 (DKRLFVLSVL…KISDFKFRVQ (242 aa)) constitute a VLIG-type G domain. Residues 1495 to 1502 (GLQSSGKS), 1548 to 1551 (DTEG), and 1625 to 1628 (TAKD) each bind GTP.

This sequence belongs to the TRAFAC class dynamin-like GTPase superfamily. Very large inducible GTPase (VLIG) family. In terms of tissue distribution, widely expressed. Expressed at low basal level in lung, heart, thymus and spleen; at still lower level in liver, ovary, kidney and brain. Expressed at very weak level in testis. Undetectable in embryo.

Its subcellular location is the cytoplasm. It localises to the cytosol. The protein resides in the nucleus. This is Interferon-induced very large GTPase 1 (Gvin1) from Mus musculus (Mouse).